The sequence spans 141 residues: MLMPKRTKYRKQMKGRNRGKAHRGNSIAFGDIAIKAIEHGRIDSRQIESARVAMTRHVKRAGKVWIRVFPDKPLTAKPLETRMGKGKGSVEKWVMNIKPGRIVYEMLGIEEGLAREALALAQSKLPFKTKIVTCESENEIY.

Residues 1–23 (MLMPKRTKYRKQMKGRNRGKAHR) form a disordered region.

It belongs to the universal ribosomal protein uL16 family. Part of the 50S ribosomal subunit.

Functionally, binds 23S rRNA and is also seen to make contacts with the A and possibly P site tRNAs. The chain is Large ribosomal subunit protein uL16 from Helicobacter acinonychis (strain Sheeba).